Consider the following 195-residue polypeptide: Imidazoleglycerol-phosphate dehydratase (195 aa).

It belongs to the imidazoleglycerol-phosphate dehydratase family.

It is found in the cytoplasm. It catalyses the reaction D-erythro-1-(imidazol-4-yl)glycerol 3-phosphate = 3-(imidazol-4-yl)-2-oxopropyl phosphate + H2O. The protein operates within amino-acid biosynthesis; L-histidine biosynthesis; L-histidine from 5-phospho-alpha-D-ribose 1-diphosphate: step 6/9. In Burkholderia cenocepacia (strain HI2424), this protein is Imidazoleglycerol-phosphate dehydratase.